The chain runs to 379 residues: Chaperone protein DnaJ (379 aa).

Residues 7–72 form the J domain; it reads CYYETLEVDR…DKRAAYDRYG (66 aa). Residues 135 to 213 form a CR-type zinc finger; the sequence is GKTAQIEIPV…CSGAGRIERE (79 aa). Zn(2+) contacts are provided by cysteine 148, cysteine 151, cysteine 165, cysteine 168, cysteine 187, cysteine 190, cysteine 201, and cysteine 204. 4 CXXCXGXG motif repeats span residues 148-155, 165-172, 187-194, and 201-208; these read CESCSGTG, CSMCGGAG, CPGCQGRG, and CPACSGAG.

This sequence belongs to the DnaJ family. Homodimer. Zn(2+) serves as cofactor.

It localises to the cytoplasm. Participates actively in the response to hyperosmotic and heat shock by preventing the aggregation of stress-denatured proteins and by disaggregating proteins, also in an autonomous, DnaK-independent fashion. Unfolded proteins bind initially to DnaJ; upon interaction with the DnaJ-bound protein, DnaK hydrolyzes its bound ATP, resulting in the formation of a stable complex. GrpE releases ADP from DnaK; ATP binding to DnaK triggers the release of the substrate protein, thus completing the reaction cycle. Several rounds of ATP-dependent interactions between DnaJ, DnaK and GrpE are required for fully efficient folding. Also involved, together with DnaK and GrpE, in the DNA replication of plasmids through activation of initiation proteins. The chain is Chaperone protein DnaJ from Rhodopseudomonas palustris (strain BisB18).